A 189-amino-acid chain; its full sequence is GMP synthase [glutamine-hydrolyzing] subunit A (189 aa).

The 189-residue stretch at 1-189 (MIVILNNGGQ…CKKCGFEFEE (189 aa)) folds into the Glutamine amidotransferase type-1 domain. Cys-76 acts as the Nucleophile in catalysis. Catalysis depends on residues His-163 and Glu-165.

Heterodimer composed of a glutamine amidotransferase subunit (A) and a GMP-binding subunit (B).

It carries out the reaction XMP + L-glutamine + ATP + H2O = GMP + L-glutamate + AMP + diphosphate + 2 H(+). It participates in purine metabolism; GMP biosynthesis; GMP from XMP (L-Gln route): step 1/1. In terms of biological role, catalyzes the synthesis of GMP from XMP. This chain is GMP synthase [glutamine-hydrolyzing] subunit A, found in Methanococcus maripaludis (strain C7 / ATCC BAA-1331).